Consider the following 73-residue polypeptide: Signaling peptide TAXIMIN 2 (73 aa).

The first 27 residues, 1–27, serve as a signal peptide directing secretion; that stretch reads MGDCRPLGFLIGLPFALVALVLALVGA.

As to expression, confined to the vasculature of various organs, including seedling roots, leaves, cotyledons, sepals and petals. Also accumulates in root hair cells.

Its subcellular location is the secreted. Functionally, signaling peptide involved in the regulation of lateral organs separation. This Arabidopsis thaliana (Mouse-ear cress) protein is Signaling peptide TAXIMIN 2.